We begin with the raw amino-acid sequence, 153 residues long: Glycosylation-dependent cell adhesion molecule 1 (153 aa).

Positions 1 to 18 (MKFLCVLLLASLAATSLA) are cleaved as a signal peptide. The O-linked (GalNAc...) threonine; partial glycan is linked to Thr-34. 5 positions are modified to phosphoserine: Ser-47, Ser-52, Ser-56, Ser-58, and Ser-64. A glycan (O-linked (HexNAc...) serine) is linked at Ser-78. N-linked (GlcNAc...) asparagine glycosylation is present at Asn-95. The segment at 95 to 115 (NATLGSEETTEHTPSDASTTE) is disordered. O-linked (GalNAc...) threonine glycosylation occurs at Thr-104.

Belongs to the PP3/GlyCAM-1 family. Highly and specifically expressed in the lactating mammary gland.

It is found in the membrane. This Bos taurus (Bovine) protein is Glycosylation-dependent cell adhesion molecule 1 (GLYCAM1).